Reading from the N-terminus, the 43-residue chain is uncharacterized protein (43 aa).

The tract at residues 13-43 (QLPRLSRPRQSHLPAQTPQPRLSYPKTRRQI) is disordered.

This is an uncharacterized protein from Clover yellow mosaic virus (CYMV).